The primary structure comprises 263 residues: Insulin-like growth factor-binding protein 1 (263 aa).

The N-terminal stretch at methionine 1 to glycine 25 is a signal peptide. The 82-residue stretch at glutamine 28 to threonine 109 folds into the IGFBP N-terminal domain. 6 disulfide bridges follow: cysteine 32–cysteine 59, cysteine 35–cysteine 61, cysteine 43–cysteine 62, cysteine 50–cysteine 65, cysteine 73–cysteine 86, and cysteine 80–cysteine 106. Positions glycine 102–serine 131 are disordered. Residues serine 122, serine 127, serine 130, serine 148, and serine 160 each carry the phosphoserine modification. Positions serine 122–serine 131 are enriched in polar residues. Tyrosine 162 bears the Phosphotyrosine mark. The Thyroglobulin type-1 domain maps to lysine 177–cysteine 255. Disulfide bonds link cysteine 180/cysteine 210, cysteine 221/cysteine 232, and cysteine 234/cysteine 255. At serine 246 the chain carries Phosphoserine. Positions arginine 250–aspartate 252 match the Cell attachment site motif.

In terms of assembly, binds equally well IGF1 and IGF2. Interacts with integrin ITGA5:ITGB1. Interacts with VHL; this interaction inhibits HIF1A degradation.

Its subcellular location is the secreted. In terms of biological role, multifunctional protein that plays a critical role in regulating the availability of IGFs such as IGF1 and IGF2 to their receptors and thereby regulates IGF-mediated cellular processes including cell migration, proliferation, differentiation or apoptosis in a cell-type specific manner. Also plays a positive role in cell migration by interacting with integrin ITGA5:ITGB1 through its RGD motif. Mechanistically, binding to integrins leads to activation of focal adhesion kinase/PTK2 and stimulation of the mitogen-activated protein kinase (MAPK) pathway. Regulates cardiomyocyte apoptosis by suppressing HIF-1alpha/HIF1A degradation through ubiquitination. This is Insulin-like growth factor-binding protein 1 (IGFBP1) from Bos taurus (Bovine).